A 115-amino-acid chain; its full sequence is Large ribosomal subunit protein uL22 (115 aa).

It belongs to the universal ribosomal protein uL22 family. In terms of assembly, part of the 50S ribosomal subunit.

In terms of biological role, this protein binds specifically to 23S rRNA; its binding is stimulated by other ribosomal proteins, e.g. L4, L17, and L20. It is important during the early stages of 50S assembly. It makes multiple contacts with different domains of the 23S rRNA in the assembled 50S subunit and ribosome. Functionally, the globular domain of the protein is located near the polypeptide exit tunnel on the outside of the subunit, while an extended beta-hairpin is found that lines the wall of the exit tunnel in the center of the 70S ribosome. This Enterococcus faecalis (strain ATCC 700802 / V583) protein is Large ribosomal subunit protein uL22.